Reading from the N-terminus, the 536-residue chain is Glucose-6-phosphate isomerase (536 aa).

The active-site Proton donor is glutamate 345. Residues histidine 376 and lysine 505 contribute to the active site.

The protein belongs to the GPI family.

The protein resides in the cytoplasm. It catalyses the reaction alpha-D-glucose 6-phosphate = beta-D-fructose 6-phosphate. It functions in the pathway carbohydrate biosynthesis; gluconeogenesis. The protein operates within carbohydrate degradation; glycolysis; D-glyceraldehyde 3-phosphate and glycerone phosphate from D-glucose: step 2/4. Catalyzes the reversible isomerization of glucose-6-phosphate to fructose-6-phosphate. In Ruegeria sp. (strain TM1040) (Silicibacter sp.), this protein is Glucose-6-phosphate isomerase.